A 294-amino-acid chain; its full sequence is MAMETQDIIKRSATNSITPPSQVRDYKAEVAKLIDVSTCIGCKACQVACSEWNDIRDEVGHCVGVYDNPADLSAKSWTVMRFSETEQNGKLEWLIRKDGCMHCEDPGCLKACPSAGAIIQYANGIVDFQSENCIGCGYCIAGCPFNIPRLNKEDNRVYKCTLCVDRVSVGQEPACVKTCPTGAIHFGTKKEMLELAEQRVAKLKARGYEHAGVYNPEGVGGTHVMYVLHHADQPELYHGLPKDPKIDTSVSLWKGALKPLAAAGFIATFAGLIFHYIGIGPNKEVDDDEEDHHE.

The Periplasmic portion of the chain corresponds to 1–256; sequence MAMETQDIIK…DTSVSLWKGA (256 aa). 4Fe-4S ferredoxin-type domains follow at residues 30 to 58, 91 to 123, 124 to 153, and 158 to 189; these read VAKL…IRDE, LEWL…QYAN, GIVD…LNKE, and YKCT…FGTK. 16 residues coordinate [4Fe-4S] cluster: Cys-39, Cys-42, Cys-45, Cys-49, Cys-100, Cys-103, Cys-108, Cys-112, Cys-133, Cys-136, Cys-139, Cys-143, Cys-160, Cys-163, Cys-175, and Cys-179. Residues 257–279 traverse the membrane as a helical segment; sequence LKPLAAAGFIATFAGLIFHYIGI. Over 280 to 294 the chain is Cytoplasmic; it reads GPNKEVDDDEEDHHE.

In terms of assembly, trimer of heterotrimers, consisting of subunits alpha, beta and gamma. [4Fe-4S] cluster serves as cofactor.

It is found in the cell inner membrane. Formate dehydrogenase allows E.coli to use formate as major electron donor during anaerobic respiration, when nitrate is used as electron acceptor. The beta subunit FdnH is an electron transfer unit containing 4 iron-sulfur clusters; it serves as a conduit for electrons that are transferred from the formate oxidation site in the alpha subunit (FdnG) to the menaquinone associated with the gamma subunit (FdnI) of formate dehydrogenase-N. Formate dehydrogenase-N is part of a system that generates proton motive force, together with the dissimilatory nitrate reductase (Nar). In Escherichia coli (strain K12), this protein is Formate dehydrogenase, nitrate-inducible, iron-sulfur subunit (fdnH).